The sequence spans 75 residues: Small ribosomal subunit protein bS16 (75 aa).

The protein belongs to the bacterial ribosomal protein bS16 family.

This is Small ribosomal subunit protein bS16 from Aliarcobacter butzleri (strain RM4018) (Arcobacter butzleri).